A 330-amino-acid chain; its full sequence is Ferric enterobactin transport system permease protein FepG (330 aa).

The Periplasmic portion of the chain corresponds to 1–7 (MIYVSRR). Residues 8 to 28 (LLITCLLLVSACVVAGIWGLR) form a helical membrane-spanning segment. Residues 29 to 62 (SGAVTLETSQVFAALMGDAPRSMTMVVTEWRLPR) lie on the Cytoplasmic side of the membrane. Residues 63-83 (VLMALLIGAALGVSGAIFQSL) form a helical membrane-spanning segment. Residues 84–92 (MRNPLGSPD) are Periplasmic-facing. The helical transmembrane segment at 93–113 (VMGFNTGAWSGVLVAMVLFGQ) threads the bilayer. The Cytoplasmic segment spans residues 114–117 (DLTA). Residues 118 to 138 (IALSAMVGGIVTSLLVWLLAW) form a helical membrane-spanning segment. At 139–146 (RNGIDTFR) the chain is on the periplasmic side. The helical transmembrane segment at 147 to 167 (LIIIGIGVRAMLVAFNTWLLL) threads the bilayer. The Cytoplasmic segment spans residues 168-190 (KASLETALTAGLWNAGSLNGLTW). A helical transmembrane segment spans residues 191-211 (AKTSPSAPIIILMLIAAALLV). Over 212-235 (RRMRLLEMGDDTACALGVSVERSR) the chain is Periplasmic. The helical transmembrane segment at 236 to 256 (LLMMLVAVVLTAAATALAGPI) threads the bilayer. Residues 257-275 (SFIALVAPHIARRISGTAR) are Cytoplasmic-facing. Residues 276-296 (WGLTQAALCGALLLLAADLCA) form a helical membrane-spanning segment. Topologically, residues 297–303 (QQLFMPY) are periplasmic. Residues 304 to 324 (QLPVGVVTVSLGGIYLIVLLI) traverse the membrane as a helical segment. Over 325-330 (QESRKK) the chain is Cytoplasmic.

This sequence belongs to the binding-protein-dependent transport system permease family. FecCD subfamily. The complex is composed of two ATP-binding proteins (FepC), two transmembrane proteins (FepD and FepG) and a solute-binding protein (FepB).

Its subcellular location is the cell inner membrane. In terms of biological role, part of the ABC transporter complex FepBDGC involved in ferric enterobactin uptake. Responsible for the translocation of the substrate across the membrane. This Escherichia coli (strain K12) protein is Ferric enterobactin transport system permease protein FepG (fepG).